Reading from the N-terminus, the 373-residue chain is Muconate cycloisomerase 1 (373 aa).

The active site involves lysine 169. Lysine 169 (proton acceptor) is an active-site residue. Positions 198, 224, and 249 each coordinate Mn(2+). Residue glutamate 327 is the Proton donor of the active site.

The protein belongs to the mandelate racemase/muconate lactonizing enzyme family. It depends on Mn(2+) as a cofactor.

The enzyme catalyses (S)-muconolactone = cis,cis-muconate + H(+). The polypeptide is Muconate cycloisomerase 1 (catB) (Rhodococcus opacus (Nocardia opaca)).